The chain runs to 405 residues: Replication factor C large subunit (405 aa).

47–54 (GPPGVGKT) serves as a coordination point for ATP.

It belongs to the activator 1 small subunits family. RfcL subfamily. Heteromultimer composed of small subunits (RfcS) and large subunits (RfcL).

Its function is as follows. Part of the RFC clamp loader complex which loads the PCNA sliding clamp onto DNA. This Saccharolobus islandicus (strain M.16.4 / Kamchatka #3) (Sulfolobus islandicus) protein is Replication factor C large subunit.